A 220-amino-acid chain; its full sequence is Putative pyrophosphatase PpaX (220 aa).

The active-site Nucleophile is the D9.

This sequence belongs to the HAD-like hydrolase superfamily. PpaX family. Mg(2+) serves as cofactor.

It catalyses the reaction diphosphate + H2O = 2 phosphate + H(+). This chain is Putative pyrophosphatase PpaX, found in Caldanaerobacter subterraneus subsp. tengcongensis (strain DSM 15242 / JCM 11007 / NBRC 100824 / MB4) (Thermoanaerobacter tengcongensis).